Here is a 704-residue protein sequence, read N- to C-terminus: MPRKTPIERYRNIGISAHIDAGKTTTTERILFYTGVSHKIGEVHDGAATMDWMEQEQERGITITSAATTAFWKGMAGNYPEHRINIIDTPGHVDFTIEVERSMRVLDGACMVYDSVGGVQPQSETVWRQANKYKVPRIAFVNKMDRVGADFFRVQRQIGERLKGVAVPIQIPVGAEEHFQGVVDLVKMKAIVWDDESQGVKFTYEDIPANLVELAHEWREKMVEAAAEASEELLEKYLTDHNSLTEDEIKAALRKRTIANEIVPMLCGSAFKNKGVQAMLDAVIDYLPSPADVPAILGHDLDDKEAERHPSDDEPFSALAFKIMTDPFVGQLIFFRVYSGVVESGDTLLNATKDKKERLGRILQMHANERKEIKEVRAGDIAAAVGLKEATTGDTLCDPGKPIILEKMEFPEPVISQAVEPKTKADQEKMGLALNRLAQEDPSFRVQTDEESGQTIISGMGELHLEIIVDRMKREFGVEATVGKPQVAYRETVRTVAEDVEGKFVKQSGGRGQYGHAVIKLEPNPGKGYEFLDEIKGGVIPREFIPAVNKGIEETLKSGVLAGYPVVDVKVHLTFGSYHDVDSNENAFRMAGSMAFKEAMRRAKPVLLEPMMAVEVETPEDFMGNVMGDLSSRRGIVQGMEDIAGGGGKLVRAEVPLAEMFGYSTSLRSATQGRATYTMEFKHYAETPSNVSEAVINAKQIGRG.

A tr-type G domain is found at 8 to 291 (ERYRNIGISA…AVIDYLPSPA (284 aa)). Residues 17-24 (AHIDAGKT), 88-92 (DTPGH), and 142-145 (NKMD) contribute to the GTP site.

This sequence belongs to the TRAFAC class translation factor GTPase superfamily. Classic translation factor GTPase family. EF-G/EF-2 subfamily.

The protein resides in the cytoplasm. Catalyzes the GTP-dependent ribosomal translocation step during translation elongation. During this step, the ribosome changes from the pre-translocational (PRE) to the post-translocational (POST) state as the newly formed A-site-bound peptidyl-tRNA and P-site-bound deacylated tRNA move to the P and E sites, respectively. Catalyzes the coordinated movement of the two tRNA molecules, the mRNA and conformational changes in the ribosome. This chain is Elongation factor G 1, found in Burkholderia pseudomallei (strain 1710b).